Here is a 117-residue protein sequence, read N- to C-terminus: Ribosome-binding factor A (117 aa).

The protein belongs to the RbfA family. Monomer. Binds 30S ribosomal subunits, but not 50S ribosomal subunits or 70S ribosomes.

It is found in the cytoplasm. In terms of biological role, one of several proteins that assist in the late maturation steps of the functional core of the 30S ribosomal subunit. Associates with free 30S ribosomal subunits (but not with 30S subunits that are part of 70S ribosomes or polysomes). Required for efficient processing of 16S rRNA. May interact with the 5'-terminal helix region of 16S rRNA. This Leptospira interrogans serogroup Icterohaemorrhagiae serovar copenhageni (strain Fiocruz L1-130) protein is Ribosome-binding factor A.